A 453-amino-acid polypeptide reads, in one-letter code: Aldehyde dehydrogenase, dimeric NADP-preferring (453 aa).

Residue Ser-2 is modified to N-acetylserine. At Lys-178 the chain carries N6-acetyllysine. 188-193 contacts NAD(+); it reads GSTAVG. Lys-194 bears the N6-acetyllysine mark. Residues Glu-210 and Cys-244 contribute to the active site.

It belongs to the aldehyde dehydrogenase family. In terms of assembly, homodimer.

The protein resides in the cytoplasm. It carries out the reaction an aldehyde + NAD(+) + H2O = a carboxylate + NADH + 2 H(+). The catalysed reaction is octanal + NAD(+) + H2O = octanoate + NADH + 2 H(+). ALDHs play a major role in the detoxification of alcohol-derived acetaldehyde. They are involved in the metabolism of corticosteroids, biogenic amines, neurotransmitters, and lipid peroxidation. Oxidizes medium and long chain aldehydes into non-toxic fatty acids. Preferentially oxidizes aromatic aldehyde substrates. Comprises about 50 percent of corneal epithelial soluble proteins. May play a role in preventing corneal damage caused by ultraviolet light. This is Aldehyde dehydrogenase, dimeric NADP-preferring (Aldh3a1) from Rattus norvegicus (Rat).